The chain runs to 332 residues: DNA-directed RNA polymerase subunit alpha (332 aa).

Residues 1–232 (MQVSNFLKPR…DQLTAFVELE (232 aa)) form an alpha N-terminal domain (alpha-NTD) region. Residues 246 to 332 (IDPVLLQPID…LREEETKVTA (87 aa)) are alpha C-terminal domain (alpha-CTD).

It belongs to the RNA polymerase alpha chain family. As to quaternary structure, homodimer. The RNAP catalytic core consists of 2 alpha, 1 beta, 1 beta' and 1 omega subunit. When a sigma factor is associated with the core the holoenzyme is formed, which can initiate transcription.

The enzyme catalyses RNA(n) + a ribonucleoside 5'-triphosphate = RNA(n+1) + diphosphate. Its function is as follows. DNA-dependent RNA polymerase catalyzes the transcription of DNA into RNA using the four ribonucleoside triphosphates as substrates. In Nitrosococcus oceani (strain ATCC 19707 / BCRC 17464 / JCM 30415 / NCIMB 11848 / C-107), this protein is DNA-directed RNA polymerase subunit alpha.